A 73-amino-acid polypeptide reads, in one-letter code: Conotoxin Bt11.1 (73 aa).

An N-terminal signal peptide occupies residues 1-20 (MKLCVAFLLVLVILPSVIGG). A propeptide spanning residues 21-35 (KPSERTLSGATRRGD) is cleaved from the precursor. Disulfide bonds link cysteine 39–cysteine 53, cysteine 46–cysteine 58, cysteine 52–cysteine 63, and cysteine 57–cysteine 70.

The protein belongs to the conotoxin I1 superfamily. In terms of tissue distribution, expressed by the venom duct.

Its subcellular location is the secreted. The sequence is that of Conotoxin Bt11.1 from Conus betulinus (Beech cone).